The chain runs to 420 residues: Gamma-glutamyl phosphate reductase (420 aa).

This sequence belongs to the gamma-glutamyl phosphate reductase family.

The protein localises to the cytoplasm. The enzyme catalyses L-glutamate 5-semialdehyde + phosphate + NADP(+) = L-glutamyl 5-phosphate + NADPH + H(+). It participates in amino-acid biosynthesis; L-proline biosynthesis; L-glutamate 5-semialdehyde from L-glutamate: step 2/2. Its function is as follows. Catalyzes the NADPH-dependent reduction of L-glutamate 5-phosphate into L-glutamate 5-semialdehyde and phosphate. The product spontaneously undergoes cyclization to form 1-pyrroline-5-carboxylate. The sequence is that of Gamma-glutamyl phosphate reductase from Neisseria meningitidis serogroup C / serotype 2a (strain ATCC 700532 / DSM 15464 / FAM18).